The primary structure comprises 283 residues: uncharacterized protein (283 aa).

Transmembrane regions (helical) follow at residues 11–31 (LFAY…YVSA), 35–55 (EGAL…WFGP), 56–76 (IYAL…MMFF), and 93–113 (LVVW…IHDI). The GGDEF domain maps to 162-283 (NSFVFLLLHM…LENEMMMNEL (122 aa)).

The protein resides in the cell membrane. This is an uncharacterized protein from Bacillus subtilis (strain 168).